The primary structure comprises 963 residues: MAEGGGYRERPDAETQKSELGALMRTTLQRGAQWYLIDSRWFKQWKKYVGFDSWDMYNVGEHNLYPGPIDNSGLFSDPESQTLKEHLIDELDYVLVPAEAWNKLLNWYGCVEGQQPIVRKVVEHGLFVKHCKVEVYLLELKLCENSDPTNVLSCHFSKADTIATIEKEMRKLFNIPAERETRLWNKYMSNTYEQLSKLDNTVQDAGLYQGQVLVIEPQNEDGTWPRQTQQSKSSTAPSRNFTTSPKSSASPYSSVSASPIANGDSTNTSGMHSSGVSRGGSGFSASYNCQESPLTHVQPGLCGLGNLGNTCFMNSALQCLSNTAPLTDYFLKDEYEAEINRDNPLGMKGEIAEAYAELIKQMWSGRDAHVAPRMFKTQVGRFAPQFSGYQQQDSQELLAFLLDGLHEDLNRVKKKPYLELKDANGRPDAVVAKEAWENHRLRNDSVIVDTFHGLFKSTLVCPECAKVSVTFDPFCYLTLPLPLKKDRVMEIFLVPADPRCRPTQYRVVVPLMGAVSDLCEALSKLSGIAAENMVVTDVYNHRFHKIFQMDEGLNHIMPRDDIFVYEVCSTSPDGSECVTLPVYFRERKSRPSSTSTGAVLYGQPLLVSVPKHKLTLESLYQAVCERISRYIKQPLPDESGSSPLELGACNGSRSGCAGEDEEEMEHQEEGREQLSETEGSGDDEPGSDHGEATQKKNKGRPCPRRLFTFSLVNSYGTADINSLATDGKLLKLNSRSTLAIDWDSETRSCYYNEQESETYEKHVSMLQPQKKKKTAVALRDCIELFTTMETLGEHDPWYCPNCKKHQQATKKFDLWSLPKILVVHLKRFSYNRYWRDKLDTVVEFPVRGLNMSEFVCDPSARPYVYDLIAVSNHYGAMGVGHYTAYAKNKLNGKWYYFDDSNVSLACEDQIVTKAAYVLFYQRRDDEFHKTPSLSFPGSSDGGARPSSSQQGTGDDETYSMDTN.

The DUSP domain maps to 11-122; that stretch reads PDAETQKSEL…GQQPIVRKVV (112 aa). Residues 27–216 are necessary for interaction with SART3; sequence TLQRGAQWYL…LYQGQVLVIE (190 aa). The Nuclear export signal motif lies at 133–141; the sequence is VEVYLLELK. Residues 142–226 form the Ubiquitin-like 1 domain; the sequence is LCENSDPTNV…PQNEDGTWPR (85 aa). The tract at residues 219–277 is disordered; sequence NEDGTWPRQTQQSKSSTAPSRNFTTSPKSSASPYSSVSASPIANGDSTNTSGMHSSGVS. Positions 225–243 are enriched in polar residues; that stretch reads PRQTQQSKSSTAPSRNFTT. The segment at 229-295 is required for USP4 activation by providing conformational flexibility between the DUSP and catalytic domains; sequence QQSKSSTAPS…SYNCQESPLT (67 aa). Low complexity predominate over residues 244 to 261; it reads SPKSSASPYSSVSASPIA. Residues 302–923 enclose the USP domain; sequence CGLGNLGNTC…AAYVLFYQRR (622 aa). C311 functions as the Nucleophile in the catalytic mechanism. Residues 384 to 386 form a regulates ubiquitin dissociation region; the sequence is PQF. The tract at residues 405 to 407 is necessary for interaction with RBL2; it reads LHE. The residue at position 445 (S445) is a Phosphoserine. A necessary for interaction with RB1 and RBL2 region spans residues 459–463; the sequence is LVCPE. Zn(2+) is bound by residues C461 and C464. Residues 483–571 form the Ubiquitin-like 2 domain; it reads LKKDRVMEIF…IFVYEVCSTS (89 aa). Residues 485–775 are interacts with DUSP and ubiquitin-like 1 domains and is required for USP4 activation; the sequence is KDRVMEIFLV…LQPQKKKKTA (291 aa). Positions 634 to 701 are disordered; that stretch reads PLPDESGSSP…ATQKKNKGRP (68 aa). A phosphoserine mark is found at S675 and S680. Positions 767–772 match the Nuclear localization signal motif; it reads QPQKKK. Zn(2+) is bound by residues C799 and C802. H881 serves as the catalytic Proton acceptor. The segment at 930–963 is disordered; the sequence is TPSLSFPGSSDGGARPSSSQQGTGDDETYSMDTN. Over residues 953-963 the composition is skewed to acidic residues; sequence GDDETYSMDTN.

Belongs to the peptidase C19 family. USP4 subfamily. Interacts with RB1 (both dephosphorylated and hypophosphorylated forms). Interacts with RBL1 and RBL2. Interacts with ADORA2A (via cytoplasmic C-terminus); the interaction is direct. Interacts with SART3; recruits USP4 to its substrate PRPF3. Phosphorylated at Ser-445 by PKB/AKT1 in response to EGF stimulus, promoting its ability deubiquitinate RHEB. In terms of processing, monoubiquitinated by TRIM21. Ubiquitination does not lead to its proteasomal degradation. Autodeubiquitinated.

It localises to the cytoplasm. The protein localises to the nucleus. The enzyme catalyses Thiol-dependent hydrolysis of ester, thioester, amide, peptide and isopeptide bonds formed by the C-terminal Gly of ubiquitin (a 76-residue protein attached to proteins as an intracellular targeting signal).. With respect to regulation, the completion of the deubiquitinase reaction is mediated by the DUSP and ubiquitin-like 1 domains which promotes the release of ubiquitin from the catalytic site enabling subsequent reactions to occur. In terms of biological role, deubiquitinating enzyme that removes conjugated ubiquitin from target proteins. Deubiquitinates PDPK1. Deubiquitinates TRIM21. Deubiquitinates receptor ADORA2A which increases the amount of functional receptor at the cell surface. Deubiquitinates HAS2. Deubiquitinates RHEB in response to EGF signaling, promoting mTORC1 signaling. May regulate mRNA splicing through deubiquitination of the U4 spliceosomal protein PRPF3. This may prevent its recognition by the U5 component PRPF8 thereby destabilizing interactions within the U4/U6.U5 snRNP. May also play a role in the regulation of quality control in the ER. In Bos taurus (Bovine), this protein is Ubiquitin carboxyl-terminal hydrolase 4 (USP4).